The following is a 379-amino-acid chain: tRNA-specific 2-thiouridylase MnmA (379 aa).

ATP is bound by residues 9–16 and Met-35; that span reads AMSGGVDS. The interaction with target base in tRNA stretch occupies residues 94–96; that stretch reads NPD. The active-site Nucleophile is Cys-99. Cysteines 99 and 195 form a disulfide. Gly-123 serves as a coordination point for ATP. The segment at 145-147 is interaction with tRNA; the sequence is KDQ. Cys-195 (cysteine persulfide intermediate) is an active-site residue. An interaction with tRNA region spans residues 307-308; that stretch reads RY.

It belongs to the MnmA/TRMU family.

The protein localises to the cytoplasm. It carries out the reaction S-sulfanyl-L-cysteinyl-[protein] + uridine(34) in tRNA + AH2 + ATP = 2-thiouridine(34) in tRNA + L-cysteinyl-[protein] + A + AMP + diphosphate + H(+). Catalyzes the 2-thiolation of uridine at the wobble position (U34) of tRNA, leading to the formation of s(2)U34. The sequence is that of tRNA-specific 2-thiouridylase MnmA from Xylella fastidiosa (strain M23).